The sequence spans 235 residues: uncharacterized protein (235 aa).

This is an uncharacterized protein from Escherichia coli (strain K12).